The following is a 354-amino-acid chain: Guanine nucleotide-binding protein G(i) subunit alpha (354 aa).

Glycine 2 is lipidated: N-myristoyl glycine. The S-palmitoyl cysteine moiety is linked to residue cysteine 3. Residues 32-354 (REVKLLLLGA…KNNLKDCGLF (323 aa)) form the G-alpha domain. The tract at residues 35–48 (KLLLLGAGESGKST) is G1 motif. GTP-binding positions include 40–47 (GAGESGKS), 175–181 (LRTRVKT), 200–204 (DVGGQ), 269–272 (NKKD), and alanine 326. The Mg(2+) site is built by serine 47 and threonine 181. A G2 motif region spans residues 173 to 181 (DVLRTRVKT). The interval 196-205 (FKMFDVGGQR) is G3 motif. Positions 265–272 (ILFLNKKD) are G4 motif. The tract at residues 324-329 (TCATDT) is G5 motif.

This sequence belongs to the G-alpha family. G(i/o/t/z) subfamily. In terms of assembly, g proteins are composed of 3 units; alpha, beta and gamma. The alpha chain contains the guanine nucleotide binding site.

In terms of biological role, guanine nucleotide-binding proteins (G proteins) are involved as modulators or transducers in various transmembrane signaling systems. This G protein is involved in 1-methyladenine-induced oocyte maturation. The chain is Guanine nucleotide-binding protein G(i) subunit alpha from Patiria pectinifera (Starfish).